Consider the following 194-residue polypeptide: Outer-membrane lipoprotein LolB (194 aa).

The first 18 residues, 1 to 18 (MTLFLRIFTFGCLLLLAG), serve as a signal peptide directing secretion. C19 is lipidated: N-palmitoyl cysteine. A lipid anchor (S-diacylglycerol cysteine) is attached at C19.

Belongs to the LolB family. Monomer.

The protein resides in the cell outer membrane. In terms of biological role, plays a critical role in the incorporation of lipoproteins in the outer membrane after they are released by the LolA protein. In Aeromonas salmonicida (strain A449), this protein is Outer-membrane lipoprotein LolB.